A 335-amino-acid polypeptide reads, in one-letter code: UPF0284 protein TON_0688 (335 aa).

It belongs to the UPF0284 family.

The chain is UPF0284 protein TON_0688 from Thermococcus onnurineus (strain NA1).